We begin with the raw amino-acid sequence, 398 residues long: Immunoglobulin heavy constant gamma 2A (398 aa).

Ig-like domains are found at residues 5–97 (PSVY…KKIE), 120–219 (PSVF…RTIS), and 228–324 (PQVY…KSFS). 3 disulfide bridges follow: C26/C81, C143/C203, and C249/C307. N-linked (GlcNAc...) asparagine glycosylation is present at N179. A helical membrane pass occupies residues 345–362 (GLWTTITIFISLFLLSVC). Residues 363–398 (YSASVTLFKVKWIFSSVVELKQTISPDYRNMIGQGA) lie on the Cytoplasmic side of the membrane.

Its subcellular location is the cell membrane. This chain is Immunoglobulin heavy constant gamma 2A, found in Mus musculus (Mouse).